Reading from the N-terminus, the 737-residue chain is Elongation factor 2 (737 aa).

The tr-type G domain maps to 18 to 262 (TRVRNIGIIA…AVIKFVPNPR (245 aa)). Residues 27-34 (AHVDHGKT), 93-97 (DTPGH), and 147-150 (NKVD) each bind GTP. His604 bears the Diphthamide mark.

The protein belongs to the TRAFAC class translation factor GTPase superfamily. Classic translation factor GTPase family. EF-G/EF-2 subfamily.

It is found in the cytoplasm. In terms of biological role, catalyzes the GTP-dependent ribosomal translocation step during translation elongation. During this step, the ribosome changes from the pre-translocational (PRE) to the post-translocational (POST) state as the newly formed A-site-bound peptidyl-tRNA and P-site-bound deacylated tRNA move to the P and E sites, respectively. Catalyzes the coordinated movement of the two tRNA molecules, the mRNA and conformational changes in the ribosome. This is Elongation factor 2 (fusA) from Sulfolobus acidocaldarius (strain ATCC 33909 / DSM 639 / JCM 8929 / NBRC 15157 / NCIMB 11770).